The following is a 319-amino-acid chain: DNA-directed RNA polymerases II, IV and V subunit 3 (319 aa).

Met-1 bears the N-acetylmethionine mark.

It belongs to the archaeal Rpo3/eukaryotic RPB3 RNA polymerase subunit family. Component of the RNA polymerase II complex consisting of at least 12 subunits. Interacts with SHH1, CLSY1, NRPB11 and NRPD1. Interacts with IYO.

It localises to the nucleus. DNA-dependent RNA polymerase catalyzes the transcription of DNA into RNA using the four ribonucleoside triphosphates as substrates. Component of RNA polymerase II which synthesizes mRNA precursors and many functional non-coding RNAs. Pol II is the central component of the basal RNA polymerase II transcription machinery. It is composed of mobile elements that move relative to each other. NRPB3 is part of the core element with the central large cleft and the clamp element that moves to open and close the cleft. Component of RNA polymerases IV and V which mediate short-interfering RNAs (siRNA) accumulation and subsequent RNA-directed DNA methylation-dependent (RdDM) transcriptional gene silencing (TGS) of endogenous repeated sequences, including transposable elements. This chain is DNA-directed RNA polymerases II, IV and V subunit 3 (NRPB3), found in Arabidopsis thaliana (Mouse-ear cress).